The chain runs to 155 residues: Protein-export protein SecB (155 aa).

This sequence belongs to the SecB family. In terms of assembly, homotetramer, a dimer of dimers. One homotetramer interacts with 1 SecA dimer.

It localises to the cytoplasm. One of the proteins required for the normal export of preproteins out of the cell cytoplasm. It is a molecular chaperone that binds to a subset of precursor proteins, maintaining them in a translocation-competent state. It also specifically binds to its receptor SecA. This chain is Protein-export protein SecB, found in Citrobacter koseri (strain ATCC BAA-895 / CDC 4225-83 / SGSC4696).